Here is a 213-residue protein sequence, read N- to C-terminus: High frequency lysogenization protein HflD homolog (213 aa).

Residues 79-122 (QGLNAELTRYTLSLMVLERKLSSAKGALNTLGDRINGLQRQLDH) adopt a coiled-coil conformation.

The protein belongs to the HflD family.

The protein resides in the cytoplasm. Its subcellular location is the cell inner membrane. The sequence is that of High frequency lysogenization protein HflD homolog from Salmonella agona (strain SL483).